The chain runs to 196 residues: Alpha-crystallin A chain (196 aa).

Met-1 is modified (N-acetylmethionine). A required for complex formation with BFSP1 and BFSP2 region spans residues 1-63 (MDVTIQHPWF…RTVLDSGISE (63 aa)). A Deamidated glutamine; partial modification is found at Gln-6. Ser-45 bears the Phosphoserine mark. Gln-50 is modified (deamidated glutamine; partial). The sHSP domain maps to 76 to 185 (HAGNPKNNPI…GHSERAIPVS (110 aa)). N6-acetyllysine occurs at positions 93 and 122. Residue His-123 participates in Zn(2+) binding. Asn-124 carries the deamidated asparagine; partial modification. Residues Glu-125 and His-130 each contribute to the Zn(2+) site. Ser-145 carries the post-translational modification Phosphoserine. Asn-146 carries the deamidated asparagine; partial modification. The tract at residues 168–196 (KVQSGLDAGHSERAIPVSREEKPSSAPSS) is disordered. Position 170 is a deamidated glutamine; partial (Gln-170). The span at 176 to 190 (GHSERAIPVSREEKP) shows a compositional bias: basic and acidic residues. Residue His-177 coordinates Zn(2+). Residue Ser-185 is glycosylated (O-linked (GlcNAc) serine).

This sequence belongs to the small heat shock protein (HSP20) family. As to quaternary structure, heteromer composed of three CRYAA and one CRYAB subunits. Inter-subunit bridging via zinc ions enhances stability, which is crucial as there is no protein turn over in the lens. Can also form homodimers and homotetramers (dimers of dimers) which serve as the building blocks of homooligomers. Within homooligomers, the zinc-binding motif is created from residues of 3 different molecules. His-123 and Glu-125 from one molecule are ligands of the zinc ion, and His-130 and His-177 residues from additional molecules complete the site with tetrahedral coordination geometry. Part of a complex required for lens intermediate filament formation composed of BFSP1, BFSP2 and CRYAA. Acetylation at Lys-93 may increase chaperone activity. Post-translationally, undergoes age-dependent proteolytical cleavage at the C-terminus.

Its subcellular location is the cytoplasm. It localises to the nucleus. In terms of biological role, contributes to the transparency and refractive index of the lens. Acts as a chaperone, preventing aggregation of various proteins under a wide range of stress conditions. Required for the correct formation of lens intermediate filaments as part of a complex composed of BFSP1, BFSP2 and CRYAA. The chain is Alpha-crystallin A chain (CRYAA) from Mesocricetus auratus (Golden hamster).